A 378-amino-acid polypeptide reads, in one-letter code: Dual-specificity RNA methyltransferase RlmN (378 aa).

Glutamate 95 serves as the catalytic Proton acceptor. The Radical SAM core domain maps to 101–345 (EETRGTLCVS…TTIRKTRGDD (245 aa)). The cysteines at positions 108 and 350 are disulfide-linked. The [4Fe-4S] cluster site is built by cysteine 115, cysteine 119, and cysteine 122. Residues 176 to 177 (GE), serine 208, 230 to 232 (SLH), and asparagine 307 contribute to the S-adenosyl-L-methionine site. The S-methylcysteine intermediate role is filled by cysteine 350.

The protein belongs to the radical SAM superfamily. RlmN family. The cofactor is [4Fe-4S] cluster.

The protein resides in the cytoplasm. It carries out the reaction adenosine(2503) in 23S rRNA + 2 reduced [2Fe-2S]-[ferredoxin] + 2 S-adenosyl-L-methionine = 2-methyladenosine(2503) in 23S rRNA + 5'-deoxyadenosine + L-methionine + 2 oxidized [2Fe-2S]-[ferredoxin] + S-adenosyl-L-homocysteine. The catalysed reaction is adenosine(37) in tRNA + 2 reduced [2Fe-2S]-[ferredoxin] + 2 S-adenosyl-L-methionine = 2-methyladenosine(37) in tRNA + 5'-deoxyadenosine + L-methionine + 2 oxidized [2Fe-2S]-[ferredoxin] + S-adenosyl-L-homocysteine. Its function is as follows. Specifically methylates position 2 of adenine 2503 in 23S rRNA and position 2 of adenine 37 in tRNAs. m2A2503 modification seems to play a crucial role in the proofreading step occurring at the peptidyl transferase center and thus would serve to optimize ribosomal fidelity. The protein is Dual-specificity RNA methyltransferase RlmN of Burkholderia pseudomallei (strain K96243).